The sequence spans 520 residues: Eukaryotic translation initiation factor 3 subunit L (520 aa).

In terms of domain architecture, PCI spans 278–478 (FATYYYVGIC…ELDIALENDL (201 aa)).

The protein belongs to the eIF-3 subunit L family. In terms of assembly, component of the eukaryotic translation initiation factor 3 (eIF-3) complex.

The protein resides in the cytoplasm. In terms of biological role, component of the eukaryotic translation initiation factor 3 (eIF-3) complex, which is involved in protein synthesis of a specialized repertoire of mRNAs and, together with other initiation factors, stimulates binding of mRNA and methionyl-tRNAi to the 40S ribosome. The eIF-3 complex specifically targets and initiates translation of a subset of mRNAs involved in cell proliferation. This is Eukaryotic translation initiation factor 3 subunit L from Yarrowia lipolytica (strain CLIB 122 / E 150) (Yeast).